A 256-amino-acid polypeptide reads, in one-letter code: 2,3,4,5-tetrahydropyridine-2,6-dicarboxylate N-acetyltransferase (256 aa).

This sequence belongs to the transferase hexapeptide repeat family. DapH subfamily.

The enzyme catalyses (S)-2,3,4,5-tetrahydrodipicolinate + acetyl-CoA + H2O = L-2-acetamido-6-oxoheptanedioate + CoA. It participates in amino-acid biosynthesis; L-lysine biosynthesis via DAP pathway; LL-2,6-diaminopimelate from (S)-tetrahydrodipicolinate (acetylase route): step 1/3. Functionally, catalyzes the transfer of an acetyl group from acetyl-CoA to tetrahydrodipicolinate. This chain is 2,3,4,5-tetrahydropyridine-2,6-dicarboxylate N-acetyltransferase, found in Lactococcus lactis subsp. lactis (strain IL1403) (Streptococcus lactis).